The chain runs to 895 residues: Protein translocase subunit SecA (895 aa).

Residues glutamine 89, 107-111, and aspartate 502 contribute to the ATP site; that span reads GEGKT. Disordered regions lie at residues 560–579 and 848–884; these read RRID…PGRT and AAPA…CGSG. Positions 879, 881, 890, and 891 each coordinate Zn(2+).

Belongs to the SecA family. In terms of assembly, monomer and homodimer. Part of the essential Sec protein translocation apparatus which comprises SecA, SecYEG and auxiliary proteins SecDF-YajC and YidC. Zn(2+) is required as a cofactor.

The protein resides in the cell inner membrane. The protein localises to the cytoplasm. The enzyme catalyses ATP + H2O + cellular proteinSide 1 = ADP + phosphate + cellular proteinSide 2.. Its function is as follows. Part of the Sec protein translocase complex. Interacts with the SecYEG preprotein conducting channel. Has a central role in coupling the hydrolysis of ATP to the transfer of proteins into and across the cell membrane, serving both as a receptor for the preprotein-SecB complex and as an ATP-driven molecular motor driving the stepwise translocation of polypeptide chains across the membrane. The sequence is that of Protein translocase subunit SecA from Ruegeria sp. (strain TM1040) (Silicibacter sp.).